Consider the following 488-residue polypeptide: Ribosomal protein uS12 methylthiotransferase RimO (488 aa).

Residues 4–120 (RKVHFVSLGC…LGRVLAGDAE (117 aa)) form the MTTase N-terminal domain. [4Fe-4S] cluster is bound by residues cysteine 13, cysteine 49, cysteine 83, cysteine 155, cysteine 159, and cysteine 162. A Radical SAM core domain is found at 141 to 377 (STPGGSAYVK…MTLQRRISHK (237 aa)). The 69-residue stretch at 380–448 (AAMIGRELEV…DYDLVGELLD (69 aa)) folds into the TRAM domain.

Belongs to the methylthiotransferase family. RimO subfamily. [4Fe-4S] cluster is required as a cofactor.

The protein resides in the cytoplasm. The catalysed reaction is L-aspartate(89)-[ribosomal protein uS12]-hydrogen + (sulfur carrier)-SH + AH2 + 2 S-adenosyl-L-methionine = 3-methylsulfanyl-L-aspartate(89)-[ribosomal protein uS12]-hydrogen + (sulfur carrier)-H + 5'-deoxyadenosine + L-methionine + A + S-adenosyl-L-homocysteine + 2 H(+). Functionally, catalyzes the methylthiolation of an aspartic acid residue of ribosomal protein uS12. In Sorangium cellulosum (strain So ce56) (Polyangium cellulosum (strain So ce56)), this protein is Ribosomal protein uS12 methylthiotransferase RimO.